A 368-amino-acid chain; its full sequence is Probable auxin efflux carrier component 5b (368 aa).

A run of 10 helical transmembrane segments spans residues 7–27 (VYKV…GYGS), 39–59 (CDAV…FDFA), 71–91 (VLAA…ACAA), 114–134 (CITG…VPLL), 145–165 (LIVQ…LLAF), 227–247 (VLGV…PSII), 251–271 (VLIM…LFMA), 286–306 (LGMA…AFAL), 312–332 (LLRL…FVFA), and 347–367 (IFGT…LGFI).

It belongs to the auxin efflux carrier (TC 2.A.69.1) family. As to expression, expressed at low levels in roots and shoot apex.

Its subcellular location is the membrane. Its function is as follows. May act as a component of the auxin efflux carrier. The sequence is that of Probable auxin efflux carrier component 5b from Oryza sativa subsp. japonica (Rice).